The sequence spans 485 residues: MATNNLSILFVASEVEGLIKSGGLADVAKALPEALQNLQQDVRITIPAYTSIERLADAEVVLETNLTSWPHTKYRVLLLTLGNNPVYLIDCDPYFNRPSMYAENNQAYTDNGERFAFFSAACLDMLPKLAFQPDIIHANDWHTGLVPFLLKHRYGNDPFFAHTKSVISIHNAVFKGVFSYDDVQCLPEFHCRNVPDAAVSATHITMLKAGVMNADKINAVSPTYAEELKTELGSHGMAWEFQQRAGDLVGILNGCDYSAWNPETDIYLPMNYSADKQSMVLGKNTCKRALQQRLNLAEKDVAMFGMVCRLTQQKGVHYLLPALADFLKHDVQVVVVGTGDPVLAAQLEEVAAQFSDKFVFVEAYDNELAHLVEAGSDFFLMPSEFEPCGLNQIYSMAYGTLPIVRGVGGLKDSVNDYDVDPCDATGFVFYEPTSQALLLTMLRALLLYAQNLTEVQRVQLHAMQKDFCWRKAAESYLQLYRSALN.

Lys-20 provides a ligand contact to ADP-alpha-D-glucose.

The protein belongs to the glycosyltransferase 1 family. Bacterial/plant glycogen synthase subfamily.

It catalyses the reaction [(1-&gt;4)-alpha-D-glucosyl](n) + ADP-alpha-D-glucose = [(1-&gt;4)-alpha-D-glucosyl](n+1) + ADP + H(+). Its pathway is glycan biosynthesis; glycogen biosynthesis. In terms of biological role, synthesizes alpha-1,4-glucan chains using ADP-glucose. This chain is Glycogen synthase, found in Vibrio parahaemolyticus serotype O3:K6 (strain RIMD 2210633).